A 573-amino-acid chain; its full sequence is Protein FAM200A (573 aa).

The disordered stretch occupies residues 1 to 51 (MTPESRDTTDLSPGGTQEMEGIVIVKVEEEDEEDHFQKERNKVESSPQVLS). Topologically, residues 1–513 (MTPESRDTTD…DDFPLLSRKS (513 aa)) are extracellular. The chain crosses the membrane as a helical span at residues 514–533 (ILLLLPFTTTYLCELGFSIL). Residues 534 to 573 (TRLKTKKRNRLNSAPDMRVALSSCVPDWKELMNRQAHPSH) lie on the Cytoplasmic side of the membrane.

The protein belongs to the FAM200 family.

The protein localises to the membrane. This Homo sapiens (Human) protein is Protein FAM200A (FAM200A).